The chain runs to 831 residues: Histone acetyltransferase SAS3 (831 aa).

The 307-residue stretch at 267-573 folds into the MYST-type HAT domain; sequence VWFSQIEYIV…VKYDKLLWEP (307 aa). The C2HC MYST-type zinc finger occupies 300–325; that stretch reads VFICEFCLKYMTSRYTFYRHQLKCLT. Residue lysine 367 is modified to N6-acetyllysine; by autocatalysis. Acetyl-CoA is bound by residues 419–421 and 426–432; these read ILT and QRKGYGQ. Glutamate 452 functions as the Proton donor/acceptor in the catalytic mechanism. Acetyl-CoA is bound at residue serine 456. Disordered stretches follow at residues 614–639 and 719–813; these read ENYN…KTSK and PLGN…SHIR. The segment covering 621–633 has biased composition (basic residues); that stretch reads AHNKRRRRRRRSS. Composition is skewed to acidic residues over residues 736 to 746 and 755 to 794; these read EQDEVENDVDT and KEDE…DDDE. The segment covering 795–812 has biased composition (basic and acidic residues); that stretch reads DGKRKGQEQDENDIESHI.

It belongs to the MYST (SAS/MOZ) family. As to quaternary structure, component of the NuA3 histone acetyltransferase (HAT) complex. The NuA3 HAT complex has 2 functionally distinct forms that participate in transcription. The NuA3a HAT complex is composed of at least NTO1, SAS3, TAF14, YNG1 and EAF6. The NuA3b HAT complex contains an additional subunit, PDP3. SAS3 interacts with CDC68/SPT16. In terms of processing, autoacetylation at Lys-367 is required for proper function.

The protein localises to the nucleus. It catalyses the reaction L-lysyl-[protein] + acetyl-CoA = N(6)-acetyl-L-lysyl-[protein] + CoA + H(+). Functionally, catalytic component of the NuA3 histone acetyltransferase complex, that acetylates H3K14. The NuA3 HAT complex has 2 functionally distinct forms. NuA3a binds H3K4me3, through the PHD finger of YNG1, and acetylates H3K14 at the promoter region of actively transcribed genes to promote transcription initiation. NuA3b binds H3K36me3 at the coding regions of actively transcribed genes, through the PWWP domain of PDP3, and coordinates transcription elongation. In vitro, SAS3 acetylates free histones H3 and H4. It is involved in silencing the HMR locus. The sequence is that of Histone acetyltransferase SAS3 from Saccharomyces cerevisiae (strain ATCC 204508 / S288c) (Baker's yeast).